Consider the following 610-residue polypeptide: T-cell immunomodulatory protein (610 aa).

The first 32 residues, 1-32, serve as a signal peptide directing secretion; the sequence is MAAGRLPSARAVLAPLFLGLALLSVGPAPARA. N-linked (GlcNAc...) asparagine glycans are attached at residues Asn35, Asn123, Asn138, Asn145, Asn150, Asn175, and Asn241. Residues 98-135 form an FG-GAP 1; atypical repeat; that stretch reads LVTSVVPGDYDGDSQMDVLLTYFPQNHTNSELGAVIFW. The FG-GAP 2; atypical repeat unit spans residues 153 to 183; that stretch reads FHDQPLIMDFNGDLIPDVFGITNESSQPQIL. The stretch at 256–291 is one FG-GAP 3; atypical repeat; the sequence is VVGQSAFADFDGDGHMDHLLPGCEDKDCQKSAIYLM. N-linked (GlcNAc...) asparagine glycosylation is found at Asn351, Asn369, and Asn480. The chain crosses the membrane as a helical span at residues 565–585; it reads VLLTAVALIGVCIFILAIIAI.

Belongs to the TIP family. In terms of assembly, interacts with RUVBL1, RUVBL2 and alpha-tubulin.

The protein localises to the secreted. It localises to the membrane. In terms of biological role, modulator of T-cell function. Has a protective effect in graft versus host disease model. The protein is T-cell immunomodulatory protein of Mus musculus (Mouse).